We begin with the raw amino-acid sequence, 424 residues long: Protein maelstrom 1 (424 aa).

The segment at residues 2–69 (PPKKHSGFMM…LTRVKKERLN (68 aa)) is a DNA-binding region (HMG box).

It belongs to the maelstrom family.

Its subcellular location is the cytoplasm. The protein resides in the nucleus. Its function is as follows. Involved both in the piRNA and miRNA metabolic processes. As a component of the meiotic nuage, plays a central role during oogenesis by repressing transposable elements and preventing their mobilization, which is essential for the germline integrity. Repression of transposable elements is mediated via the piRNA metabolic process, which mediates the repression of transposable elements during meiosis by forming complexes composed of piRNAs and Piwi proteins and governs the repression of transposons. As a nuclear component, it is required for proper differentiation in the germline stem cell (GSC) lineage by repressing microRNA-7 (miR-7), thereby acting as an indirect regulator of bag-of-marbles (Bam). Acts by binding to the promoter of miR-7 gene and repressing its expression; miR-7 repression alleviates the Bam repression by miR-7, thereby allowing differentiation in the germline stem cell (GSC) lineage. This is Protein maelstrom 1 (mael1) from Drosophila ananassae (Fruit fly).